A 966-amino-acid chain; its full sequence is Polycystin-2 (966 aa).

The disordered stretch occupies residues 1-106; the sequence is MVNSRRVQPQ…DDDEVEGEEG (106 aa). Residues 1–217 are Cytoplasmic-facing; that stretch reads MVNSRRVQPQ…NANREKYLKS (217 aa). A compositionally biased stretch (gly residues) spans 30-44; it reads VAGGAGLAVPGGLGE. Residues 46 to 56 are compositionally biased toward basic and acidic residues; that stretch reads RGLEIEMERIR. Residues 58 to 79 show a composition bias toward low complexity; sequence AAARDPPAGASASPSPPLSSCS. Phosphoserine is present on residues Ser72 and Ser76. A compositionally biased stretch (acidic residues) spans 91-105; that stretch reads EAEEDDDDDEVEGEE. Omega-N-methylarginine is present on Arg135. The interval 147-179 is disordered; it reads HLSGRRRRLEDQGAQCPSPAGGGDPLHRHLPLE. A helical membrane pass occupies residues 218–239; the sequence is VLRELVTYLFFLVVLCILTYGM. Topologically, residues 240–466 are extracellular; that stretch reads MSSNVYYYTR…PVKLIRYVTA (227 aa). N-linked (GlcNAc...) asparagine glycosylation is found at Asn297, Asn303, and Asn326. Cys329 and Cys342 are joined by a disulfide. Asn360 and Asn373 each carry an N-linked (GlcNAc...) asparagine glycan. A helical transmembrane segment spans residues 467–487; it reads FDFFLAACEIIFCFFIIYYVV. Residues 488 to 503 lie on the Cytoplasmic side of the membrane; the sequence is EEILEIRIHRLSYFRS. The chain crosses the membrane as a helical span at residues 504-524; the sequence is FWNCLDVVIVVLSVVAMVINI. At 525-550 the chain is on the extracellular side; that stretch reads YRMSNAEGLLQFLEDQNSFPNFEHVA. A helical transmembrane segment spans residues 551 to 571; that stretch reads YWQIQFNNISAVMVFLVWIKL. Gln555 lines the cholesterol pocket. Over 572–595 the chain is Cytoplasmic; sequence FKFINFNRTMSQLSTTMSRCAKDL. The chain crosses the membrane as a helical span at residues 596–617; it reads FGFTIMFSIIFLAYAQLAYLVF. Residues 618–629 are Extracellular-facing; it reads GTQVDDFSTFQE. The pore-forming intramembrane region spans 630–644; sequence CIFTQFRIILGDINF. Leu639 is a Ca(2+) binding site. The Selectivity filter signature appears at 639–641; the sequence is LGD. The Extracellular segment spans residues 645 to 652; it reads AEIEEANR. A helical transmembrane segment spans residues 653 to 673; that stretch reads VLGPLYFTTFVFFMFFILLNM. Residues 674-966 lie on the Cytoplasmic side of the membrane; sequence FLAIINDSYS…GGNGSANVHA (293 aa). In terms of domain architecture, EF-hand spans 748–783; that stretch reads HTDAEIEAIFTKYDQDGDQELTEREHQQMRDDLEKE. Residues Asp761, Asp763, Asp765, Glu767, and Glu772 each coordinate Ca(2+). Residues 764 to 828 form a disordered region; it reads GDQELTEREH…GHSSRRRGSI (65 aa). Residues 768 to 793 show a composition bias toward basic and acidic residues; it reads LTEREHQQMRDDLEKEREDLDLEHSS. The span at 794–805 shows a compositional bias: low complexity; sequence LPRPMSSRSFPR. Phosphoserine is present on residues Ser799, Ser806, Ser810, and Ser827. The interval 801-820 is linker; the sequence is RSFPRSLDDSEEEDDEDSGH. Residues 808–819 are important for interaction with PACS1 and PACS2; the sequence is DDSEEEDDEDSG. The stretch at 831–870 forms a coiled coil; that stretch reads GVSYEEFQVLVRRVDRMEHSIGSIVSKIDAVIVKLEIMER. Positions 914-966 are disordered; the sequence is WESDDAASQTGHGVSTQVGLGGQPHPRNPRPPSSQSAEGLEGGGGNGSANVHA. The segment covering 919–931 has biased composition (polar residues); sequence AASQTGHGVSTQV.

The protein belongs to the polycystin family. As to quaternary structure, homotetramer. Component of the heterotetrameric polycystin channel complex with PKD1; the tetramer contains one PKD1 chain and three PKD2 chains. Interaction with PKD1 is required for ciliary localization. Isoform 1 interacts with PKD1 while isoform 3 does not. Interacts with PKD1L1. Interacts with CD2AP. Interacts with HAX1. Interacts with NEK8. Part of a complex containing AKAP5, ADCY5, ADCY6 and PDE4C. Interacts (via C-terminus) with TRPV4 (via C-terminus). Interacts (via C-terminal acidic region) with PACS1 and PACS2; these interactions retain the protein in the endoplasmic reticulum and prevent trafficking to the cell membrane. Interacts with TMEM33; enhancing its opening at the ER membrane. Interacts with TMEM120A; TMEM120A inhibits PKD2 channel activity through the physical association of PKD2 with TMEM120A. Interacts (via N-terminus) with RYR2; regulates RYR2 channel activity. In terms of processing, N-glycosylated. The four subunits in a tetramer probably differ in the extent of glycosylation; simultaneous glycosylation of all experimentally validated sites would probably create steric hindrance. Post-translationally, sumoylated by SUMO1; sumoylation regulates PKD2 membrane recycling and is necessary for intravascular pressure-induced arterial contractility. Phosphorylated. Phosphorylation is important for protein function; a mutant that lacks the N-terminal phosphorylation sites cannot complement a zebrafish pkd2-deficient mutant. PKD-mediated phosphorylation at the C-terminus regulates its function in the release of Ca(2+) stores from the endoplasmic reticulum. Phosphorylation at Ser-810 regulates PKD2 trafficking. Phosphorylation at Ser-72 is required for PKD2 trafficking to or retention at the lateral plasma membrane. Phosphorylation at Ser-799, Ser-810 and Ser-827 regulates PKD2 channel activity. In terms of tissue distribution, detected in kidney epithelium (at protein level). Highly expressed on basolateral membranes in distal convoluted tubules and medullary thick ascending limbs of Henle. Detected at much lower levels in cortical and medullary collecting tubules, and not detected in the glomerular tuft, in thin limbs of Henle, interstitium and blood vessels (at protein level). Expressed in mesenchymally derived structures in the developing embryo at day 12.5. Isoform 1 is predominantly expressed in kidney at all developmental stages with high levels also detected in lung. Isoform 3 shows highest expression in brain with lower expression in kidney and lung, low levels in thymus and is hardly detectable in liver.

The protein resides in the cell projection. It localises to the cilium membrane. The protein localises to the cell membrane. Its subcellular location is the basolateral cell membrane. It is found in the cytoplasmic vesicle membrane. The protein resides in the endoplasmic reticulum membrane. It localises to the golgi apparatus. The protein localises to the vesicle. Its subcellular location is the secreted. It is found in the extracellular exosome. It carries out the reaction K(+)(in) = K(+)(out). The enzyme catalyses Na(+)(in) = Na(+)(out). It catalyses the reaction Ca(2+)(in) = Ca(2+)(out). Its activity is regulated as follows. Channel activity is regulated by phosphorylation. The channel is activated by increased cytoplasmic Ca(2+) (in the uM range) and by membrane depolarization. TMEM120A inhibits the channel activity of PKD2, and mediates mechanosensitivity of the PKD2-TMEM120A channel complex. At the endoplasmic reticulum membrane (ER), TMEM33 enhances its channel activity. PKD1/ PKD2 complex on the plasma membrane is activated by PKD1 N-terminus. Forms a nonselective cation channel. Can function as a homotetrameric ion channel or can form heteromer with PKD1. Displays distinct function depending on its subcellular localization and regulation by its binding partners. Functions as a cation channel, with a preference for monovalent cations over divalent cations that allows K(+), Na(+) and Ca(2+) influx, with low selectivity for Ca(2+). Involved in fluid-flow mechanosensation by the primary cilium in renal epithelium. In the endoplasmic reticulum, likely functions as a K(+) channel to facilitate Ca(2+) release. The heterotetrameric PKD1/PKD2 channel has higher Ca(2+) permeability than homomeric PKD2 channel and acts as a primarily Ca(2+)-permeable channel. PKD1 and PKD2 may function through a common signaling pathway that is necessary to maintain the normal, differentiated state of renal tubule cells. Interacts with and acts as a regulator of a number of other channels, such as TRPV4, TRPC1, IP3R, RYR2, ultimately further affecting intracellular signaling, to modulate intracellular Ca(2+) signaling. Together with TRPV4, forms mechano- and thermosensitive channels in cilium. In cardiomyocytes, PKD2 modulates Ca(2+) release from stimulated RYR2 receptors through direct association. Also involved in left-right axis specification via its role in sensing nodal flow; forms a complex with PKD1L1 in cilia to facilitate flow detection in left-right patterning. Acts as a regulator of cilium length together with PKD1. Mediates systemic blood pressure and contributes to the myogenic response in cerebral arteries though vasoconstriction. This Mus musculus (Mouse) protein is Polycystin-2.